The primary structure comprises 459 residues: tRNA(Ile)-lysidine synthase (459 aa).

An ATP-binding site is contributed by 38–43 (SGGMDS).

The protein belongs to the tRNA(Ile)-lysidine synthase family.

It localises to the cytoplasm. It catalyses the reaction cytidine(34) in tRNA(Ile2) + L-lysine + ATP = lysidine(34) in tRNA(Ile2) + AMP + diphosphate + H(+). Ligates lysine onto the cytidine present at position 34 of the AUA codon-specific tRNA(Ile) that contains the anticodon CAU, in an ATP-dependent manner. Cytidine is converted to lysidine, thus changing the amino acid specificity of the tRNA from methionine to isoleucine. The protein is tRNA(Ile)-lysidine synthase of Acinetobacter baylyi (strain ATCC 33305 / BD413 / ADP1).